A 207-amino-acid chain; its full sequence is Large ribosomal subunit protein bL25 (207 aa).

This sequence belongs to the bacterial ribosomal protein bL25 family. CTC subfamily. As to quaternary structure, part of the 50S ribosomal subunit; part of the 5S rRNA/L5/L18/L25 subcomplex. Contacts the 5S rRNA. Binds to the 5S rRNA independently of L5 and L18.

In terms of biological role, this is one of the proteins that binds to the 5S RNA in the ribosome where it forms part of the central protuberance. The sequence is that of Large ribosomal subunit protein bL25 from Dictyoglomus thermophilum (strain ATCC 35947 / DSM 3960 / H-6-12).